We begin with the raw amino-acid sequence, 82 residues long: uncharacterized protein (82 aa).

This is an uncharacterized protein from Dictyostelium discoideum (Social amoeba).